A 142-amino-acid polypeptide reads, in one-letter code: Transcriptional regulator MraZ (142 aa).

2 SpoVT-AbrB domains span residues 5–51 (ASSL…PRNE) and 77–120 (AMDV…DAAT).

Belongs to the MraZ family. In terms of assembly, forms oligomers.

It is found in the cytoplasm. The protein localises to the nucleoid. The polypeptide is Transcriptional regulator MraZ (Polaromonas sp. (strain JS666 / ATCC BAA-500)).